The following is a 190-amino-acid chain: Proline-rich protein 3 (190 aa).

Disordered stretches follow at residues 1 to 94 (MPKR…GLGP), 110 to 130 (PPFP…KEAR), and 142 to 161 (KNTY…SDRP). Residues 37–48 (MGPPSLLGPPPM) show a composition bias toward pro residues. The C3H1-type zinc finger occupies 157-185 (KSDRPVCRHFSKKGHCRYEDHCAFYHPGV).

This chain is Proline-rich protein 3 (Prr3), found in Mus musculus (Mouse).